The primary structure comprises 455 residues: MGLSVIILAAGQGKRMASSTPKILHPLGGIPLLERVVNTARLLNPHTIHVVYGNGGSHVREKLNYLPVHWIEQSQQLGTGHAVLQAIPFCQNEDRVLILYGDVPLISPKTLNSLLENTPSNGLGVVVAELPDPTGLGRIIRDDFGNILSIVEHKDAAEHQLKIREINTGIMTTTAMNLKKWLPQLNNNNCQKEYYLTDTVALAVAEGCPVGGVAAQCCEEVQGVNDRWELTKLERYYQRLMAKKLSLAGVTIIDPERFDARGENIEIAPDVVIDVNVILEGNVQLDRNVRIGPNVILKNTTVGENTEIHANSVIEAAVIKANCSVGPFARLRPGSVLEEGAKVGNFVEMKKTTLGRGSKANHLTYLGDTIIGKNVNVGAGTITCNYDGANKWQTKIEDGAFIGSNVALVAPLTVGKNATIGAGSTLSQDAPPDQLTVARERQRTIKGWHRPTKKE.

Positions 1-227 (MGLSVIILAA…CEEVQGVNDR (227 aa)) are pyrophosphorylase. UDP-N-acetyl-alpha-D-glucosamine contacts are provided by residues 8–11 (LAAG), Lys-22, Gln-73, 78–79 (GT), 100–102 (YGD), Gly-137, Glu-152, Asn-167, and Asn-225. Position 102 (Asp-102) interacts with Mg(2+). Mg(2+) is bound at residue Asn-225. Residues 228 to 248 (WELTKLERYYQRLMAKKLSLA) form a linker region. The N-acetyltransferase stretch occupies residues 249–455 (GVTIIDPERF…KGWHRPTKKE (207 aa)). UDP-N-acetyl-alpha-D-glucosamine contacts are provided by Arg-332 and Lys-350. Catalysis depends on His-362, which acts as the Proton acceptor. UDP-N-acetyl-alpha-D-glucosamine-binding residues include Tyr-365 and Asn-376. Residues Ala-379, 385-386 (NY), Ser-404, Ala-422, and Arg-439 contribute to the acetyl-CoA site.

This sequence in the N-terminal section; belongs to the N-acetylglucosamine-1-phosphate uridyltransferase family. It in the C-terminal section; belongs to the transferase hexapeptide repeat family. Homotrimer. It depends on Mg(2+) as a cofactor.

It localises to the cytoplasm. It carries out the reaction alpha-D-glucosamine 1-phosphate + acetyl-CoA = N-acetyl-alpha-D-glucosamine 1-phosphate + CoA + H(+). The enzyme catalyses N-acetyl-alpha-D-glucosamine 1-phosphate + UTP + H(+) = UDP-N-acetyl-alpha-D-glucosamine + diphosphate. It functions in the pathway nucleotide-sugar biosynthesis; UDP-N-acetyl-alpha-D-glucosamine biosynthesis; N-acetyl-alpha-D-glucosamine 1-phosphate from alpha-D-glucosamine 6-phosphate (route II): step 2/2. It participates in nucleotide-sugar biosynthesis; UDP-N-acetyl-alpha-D-glucosamine biosynthesis; UDP-N-acetyl-alpha-D-glucosamine from N-acetyl-alpha-D-glucosamine 1-phosphate: step 1/1. The protein operates within bacterial outer membrane biogenesis; LPS lipid A biosynthesis. Its function is as follows. Catalyzes the last two sequential reactions in the de novo biosynthetic pathway for UDP-N-acetylglucosamine (UDP-GlcNAc). The C-terminal domain catalyzes the transfer of acetyl group from acetyl coenzyme A to glucosamine-1-phosphate (GlcN-1-P) to produce N-acetylglucosamine-1-phosphate (GlcNAc-1-P), which is converted into UDP-GlcNAc by the transfer of uridine 5-monophosphate (from uridine 5-triphosphate), a reaction catalyzed by the N-terminal domain. This Coxiella burnetii (strain CbuK_Q154) (Coxiella burnetii (strain Q154)) protein is Bifunctional protein GlmU.